We begin with the raw amino-acid sequence, 416 residues long: LL-diaminopimelate aminotransferase (416 aa).

Substrate contacts are provided by Y15 and G42. Pyridoxal 5'-phosphate is bound by residues Y72, 108-109 (SK), Y132, N187, Y218, and 246-248 (SFS). Substrate is bound by residues K109, Y132, and N187. K249 carries the post-translational modification N6-(pyridoxal phosphate)lysine. Pyridoxal 5'-phosphate is bound by residues R257 and N292. 2 residues coordinate substrate: N292 and R388.

The protein belongs to the class-I pyridoxal-phosphate-dependent aminotransferase family. LL-diaminopimelate aminotransferase subfamily. In terms of assembly, homodimer. Pyridoxal 5'-phosphate serves as cofactor.

The enzyme catalyses (2S,6S)-2,6-diaminopimelate + 2-oxoglutarate = (S)-2,3,4,5-tetrahydrodipicolinate + L-glutamate + H2O + H(+). Its pathway is amino-acid biosynthesis; L-lysine biosynthesis via DAP pathway; LL-2,6-diaminopimelate from (S)-tetrahydrodipicolinate (aminotransferase route): step 1/1. Its function is as follows. Involved in the synthesis of meso-diaminopimelate (m-DAP or DL-DAP), required for both lysine and peptidoglycan biosynthesis. Catalyzes the direct conversion of tetrahydrodipicolinate to LL-diaminopimelate. The chain is LL-diaminopimelate aminotransferase from Synechococcus sp. (strain JA-2-3B'a(2-13)) (Cyanobacteria bacterium Yellowstone B-Prime).